A 476-amino-acid polypeptide reads, in one-letter code: Serine/threonine-protein kinase Chk1 (476 aa).

Residues 1–265 (MAVPFVEDWD…IPDIKKDRWY (265 aa)) form an interaction with CLSPN region. One can recognise a Protein kinase domain in the interval 9 to 265 (WDLVQTLGEG…IPDIKKDRWY (257 aa)). ATP-binding positions include 15–23 (LGEGAYGEV) and K38. D130 acts as the Proton acceptor in catalysis. A Glycyl lysine isopeptide (Lys-Gly) (interchain with G-Cter in ubiquitin) cross-link involves residue K132. The segment at 267–329 (KPLNRGAKRP…EPRTGLSLWD (63 aa)) is disordered. Position 280 is a phosphoserine; by PKB/AKT1 (S280). Residues 280-291 (SGGMSESSSGFS) show a composition bias toward low complexity. 3 positions are modified to phosphoserine: S286, S296, and S301. A compositionally biased stretch (polar residues) spans 298-320 (LDFSPINSGSSEENVKFSSSQPE). Residues S317 and S345 each carry the phosphoserine; by ATM and ATR modification. The interval 391 to 476 (QCLKETFEKL…SSQKVWFPVT (86 aa)) is autoinhibitory region. Residue K436 forms a Glycyl lysine isopeptide (Lys-Gly) (interchain with G-Cter in ubiquitin) linkage. Phosphoserine is present on residues S463, S467, and S468.

It belongs to the protein kinase superfamily. CAMK Ser/Thr protein kinase family. NIM1 subfamily. As to quaternary structure, interacts (phosphorylated by ATR) with RAD51. Interacts with and phosphorylates CLSPN, an adapter protein that regulates the ATR-dependent phosphorylation of CHEK1. Interacts with BRCA1. Interacts with and phosphorylates CDC25A, CDC25B and CDC25C. Interacts with FBXO6, which regulates CHEK1. Interacts with PPM1D, which regulates CHEK1 through dephosphorylation. Interacts with TIMELESS; DNA damage-dependent. Interacts with FEM1B; activates CHEK1 in response to stress. Interacts with TLK1. Interacts with XPO1 and YWHAZ. Interacts with CDK5RAP3; antagonizes CHEK1. Phosphorylated by ATR in a RAD17-dependent manner in response to ultraviolet irradiation and inhibition of DNA replication. Phosphorylated by ATM in response to ionizing irradiation. ATM and ATR can both phosphorylate Ser-317 and Ser-345 and this results in enhanced kinase activity. Phosphorylation at Ser-345 induces a change in the conformation of the protein, activates the kinase activity and is a prerequisite for interaction with FBXO6 and subsequent ubiquitination at Lys-436. Phosphorylation at Ser-345 also increases binding to 14-3-3 proteins and promotes nuclear retention. Conversely, dephosphorylation at Ser-345 by PPM1D may contribute to exit from checkpoint mediated cell cycle arrest. Phosphorylation at Ser-280 by AKT1/PKB, may promote mono and/or diubiquitination. Also phosphorylated at undefined residues during mitotic arrest, resulting in decreased activity. Post-translationally, ubiquitinated. Mono or diubiquitination promotes nuclear exclusion. The activated form (phosphorylated on Ser-345) is polyubiquitinated at Lys-436 by some SCF-type E3 ubiquitin ligase complex containing FBXO6 promoting its degradation. Ubiquitination and degradation are required to terminate the checkpoint and ensure that activated CHEK1 does not accumulate as cells progress through S phase, when replication forks encounter transient impediments during normal DNA replication. 'Lys-63'-mediated ubiquitination by TRAF4 at Lys-132 activates cell cycle arrest and activation of DNA repair. In terms of processing, proteolytically cleaved at the C-terminus by SPRTN during normal DNA replication, thereby promoting CHEK1 removal from chromatin and activating the protein kinase activity. In terms of tissue distribution, expressed in brain, heart, liver, lung, skeletal muscle, spleen and testis. As to expression, expressed only in liver.

The protein localises to the nucleus. It localises to the chromosome. The protein resides in the cytoplasm. Its subcellular location is the cytoskeleton. It is found in the microtubule organizing center. The protein localises to the centrosome. The enzyme catalyses L-seryl-[protein] + ATP = O-phospho-L-seryl-[protein] + ADP + H(+). It carries out the reaction L-threonyl-[protein] + ATP = O-phospho-L-threonyl-[protein] + ADP + H(+). Activated through phosphorylation predominantly by ATR but also by ATM in response to DNA damage or inhibition of DNA replication. Activation is modulated by several mediators including CLSPN, BRCA1 and FEM1B. Proteolytic cleavage at the C-terminus by SPRTN during normal DNA replication activates the protein kinase activity. Functionally, serine/threonine-protein kinase which is required for checkpoint-mediated cell cycle arrest and activation of DNA repair in response to the presence of DNA damage or unreplicated DNA. May also negatively regulate cell cycle progression during unperturbed cell cycles. This regulation is achieved by a number of mechanisms that together help to preserve the integrity of the genome. Recognizes the substrate consensus sequence [R-X-X-S/T]. Binds to and phosphorylates CDC25A, CDC25B and CDC25C. Phosphorylation of CDC25A at 'Ser-178' and 'Thr-507' and phosphorylation of CDC25C at 'Ser-216' creates binding sites for 14-3-3 proteins which inhibit CDC25A and CDC25C. Phosphorylation of CDC25A at 'Ser-76', 'Ser-124', 'Ser-178', 'Ser-279' and 'Ser-293' promotes proteolysis of CDC25A. Phosphorylation of CDC25A at 'Ser-76' primes the protein for subsequent phosphorylation at 'Ser-79', 'Ser-82' and 'Ser-88' by NEK11, which is required for polyubiquitination and degradation of CDCD25A. Inhibition of CDC25 leads to increased inhibitory tyrosine phosphorylation of CDK-cyclin complexes and blocks cell cycle progression. Also phosphorylates NEK6. Binds to and phosphorylates RAD51 at 'Thr-309', which promotes the release of RAD51 from BRCA2 and enhances the association of RAD51 with chromatin, thereby promoting DNA repair by homologous recombination. Phosphorylates multiple sites within the C-terminus of TP53, which promotes activation of TP53 by acetylation and promotes cell cycle arrest and suppression of cellular proliferation. Also promotes repair of DNA cross-links through phosphorylation of FANCE. Binds to and phosphorylates TLK1 at 'Ser-743', which prevents the TLK1-dependent phosphorylation of the chromatin assembly factor ASF1A. This may enhance chromatin assembly both in the presence or absence of DNA damage. May also play a role in replication fork maintenance through regulation of PCNA. May regulate the transcription of genes that regulate cell-cycle progression through the phosphorylation of histones. Phosphorylates histone H3.1 (to form H3T11ph), which leads to epigenetic inhibition of a subset of genes. May also phosphorylate RB1 to promote its interaction with the E2F family of transcription factors and subsequent cell cycle arrest. Phosphorylates SPRTN, promoting SPRTN recruitment to chromatin. Reduces replication stress and activates the G2/M checkpoint, by phosphorylating and inactivating PABIR1/FAM122A and promoting the serine/threonine-protein phosphatase 2A-mediated dephosphorylation and stabilization of WEE1 levels and activity. This chain is Serine/threonine-protein kinase Chk1 (Chek1), found in Rattus norvegicus (Rat).